Here is a 1517-residue protein sequence, read N- to C-terminus: Neurite extension and migration factor (1517 aa).

Basic and acidic residues predominate over residues 381–405 (DKKKGKEEVHEDKSIEKKDEKDNGE). 7 disordered regions span residues 381 to 416 (DKKK…PCSG), 505 to 529 (VNER…PKKR), 644 to 697 (SMEA…GLIG), 732 to 775 (KKIK…HMSE), 1065 to 1084 (RHSS…SPQS), 1161 to 1228 (DEPA…KKGK), and 1372 to 1422 (AGTP…SSED). A compositionally biased stretch (polar residues) spans 644–663 (SMEASASSKQVSFGSDQKQA). Low complexity predominate over residues 678 to 687 (SALLAAPSSA). Positions 764-773 (TPGTSNSSHM) are enriched in polar residues.

It localises to the nucleus. The protein localises to the cytoplasm. Its function is as follows. Involved in neurite outgrowth by regulating cell-cell adhesion via the N-cadherin signaling pathway. May act by regulating expression of protein-coding genes, such as N-cadherins and integrin beta-1 (ITGB1). In Rattus norvegicus (Rat), this protein is Neurite extension and migration factor.